A 787-amino-acid polypeptide reads, in one-letter code: DNA ligase (787 aa).

NAD(+) is bound by residues Asp32–Asp36, Ser81–Leu82, and Glu121. The active-site N6-AMP-lysine intermediate is Lys123. 4 residues coordinate NAD(+): Arg144, Glu181, Lys297, and Lys321. Positions 415, 418, 445, and 451 each coordinate Zn(2+). A BRCT domain is found at Val703 to Asp787.

The protein belongs to the NAD-dependent DNA ligase family. LigA subfamily. The cofactor is Mg(2+). It depends on Mn(2+) as a cofactor.

It carries out the reaction NAD(+) + (deoxyribonucleotide)n-3'-hydroxyl + 5'-phospho-(deoxyribonucleotide)m = (deoxyribonucleotide)n+m + AMP + beta-nicotinamide D-nucleotide.. Functionally, DNA ligase that catalyzes the formation of phosphodiester linkages between 5'-phosphoryl and 3'-hydroxyl groups in double-stranded DNA using NAD as a coenzyme and as the energy source for the reaction. It is essential for DNA replication and repair of damaged DNA. This chain is DNA ligase, found in Pseudomonas syringae pv. tomato (strain ATCC BAA-871 / DC3000).